A 971-amino-acid polypeptide reads, in one-letter code: DNA-directed RNA polymerase subunit Rpo1N (971 aa).

A Blocked amino end (Met) modification is found at Met-1. Residues Cys-62, Cys-65, Cys-72, His-75, Cys-102, Cys-105, Cys-149, and Cys-152 each coordinate Zn(2+). The segment at 185–204 (SMQPDEDEDDAGVSPQELAE) is disordered. Mg(2+)-binding residues include Asp-527, Asp-529, and Asp-531. The interval 951–971 (VEEPPTNLSEHGAAWEVESDD) is disordered.

This sequence belongs to the RNA polymerase beta' chain family. In terms of assembly, part of the RNA polymerase complex. It depends on Mg(2+) as a cofactor. Zn(2+) is required as a cofactor. Post-translationally, the N-terminus is blocked.

It is found in the cytoplasm. The enzyme catalyses RNA(n) + a ribonucleoside 5'-triphosphate = RNA(n+1) + diphosphate. Functionally, DNA-dependent RNA polymerase (RNAP) catalyzes the transcription of DNA into RNA using the four ribonucleoside triphosphates as substrates. Forms the clamp head domain. In Halobacterium salinarum (strain ATCC 29341 / DSM 671 / R1), this protein is DNA-directed RNA polymerase subunit Rpo1N.